The following is a 122-amino-acid chain: Small ribosomal subunit protein uS13 (122 aa).

Positions 93-122 (RRGLPVRGQRTKTNARTRKGPKKTIAGKKK) are disordered.

It belongs to the universal ribosomal protein uS13 family. In terms of assembly, part of the 30S ribosomal subunit. Forms a loose heterodimer with protein S19. Forms two bridges to the 50S subunit in the 70S ribosome.

In terms of biological role, located at the top of the head of the 30S subunit, it contacts several helices of the 16S rRNA. In the 70S ribosome it contacts the 23S rRNA (bridge B1a) and protein L5 of the 50S subunit (bridge B1b), connecting the 2 subunits; these bridges are implicated in subunit movement. Contacts the tRNAs in the A and P-sites. This Corynebacterium urealyticum (strain ATCC 43042 / DSM 7109) protein is Small ribosomal subunit protein uS13.